The sequence spans 370 residues: DNA replication and repair protein RecF (370 aa).

Position 30 to 37 (Gly30 to Thr37) interacts with ATP.

It belongs to the RecF family.

It localises to the cytoplasm. In terms of biological role, the RecF protein is involved in DNA metabolism; it is required for DNA replication and normal SOS inducibility. RecF binds preferentially to single-stranded, linear DNA. It also seems to bind ATP. The chain is DNA replication and repair protein RecF from Staphylococcus aureus (strain USA300).